A 148-amino-acid chain; its full sequence is Probable DNA-directed RNA polymerases I, II, and III subunit RPABC3 (148 aa).

Residues 16–40 form a non-specific ssDNA binding region; sequence DPDGKKFDRVSRYFCDAESFKMELI.

Belongs to the eukaryotic RPB8 RNA polymerase subunit family. In terms of assembly, component of the RNA polymerase I (Pol I), RNA polymerase II (Pol II) and RNA polymerase III (Pol III) complexes consisting of at least 13, 12 and 17 subunits, respectively. Directly interacts with POLR2A.

It is found in the nucleus. Functionally, DNA-dependent RNA polymerase catalyzes the transcription of DNA into RNA using the four ribonucleoside triphosphates as substrates. Common component of RNA polymerases I, II and III which synthesize ribosomal RNA precursors, mRNA precursors and many functional non-coding RNAs, and small RNAs, such as 5S rRNA and tRNAs, respectively. The chain is Probable DNA-directed RNA polymerases I, II, and III subunit RPABC3 (rpb-8) from Caenorhabditis elegans.